The sequence spans 472 residues: Zinc finger CCCH domain-containing protein 59 (472 aa).

A disordered region spans residues 87 to 139 (YKSPEGNRPRQNAANGSAKPQVIGTGHRVSNQPRKNAVYGPRSSSLSDTRGCG). The C3H1-type zinc finger occupies 145–172 (SPKKSVCNFWKDGNCKKGEKCQFLHSWS). WD repeat units follow at residues 185 to 226 (GHKN…RSIN), 261 to 301 (HLEG…SDPF), 310 to 347 (HHSG…CRMT), 350 to 387 (QHIG…SLKV), and 436 to 472 (FSTQ…GTKV).

This chain is Zinc finger CCCH domain-containing protein 59 (ZFWD3), found in Arabidopsis thaliana (Mouse-ear cress).